The sequence spans 971 residues: Exportin-2 (971 aa).

Position 1 is an N-acetylmethionine (methionine 1). The 74-residue stretch at 29–102 folds into the Importin N-terminal domain; it reads AEKFLESVEG…KANIVHLMLS (74 aa). Residue serine 112 is modified to Phosphoserine. Lysine 574 and lysine 824 each carry N6-acetyllysine. Serine 931 is subject to Phosphoserine.

The protein belongs to the XPO2/CSE1 family. In terms of assembly, found in a complex with CSE1L/XPO2, Ran and KPNA2. Binds with high affinity to importin-alpha only in the presence of RanGTP. The complex is dissociated by the combined action of RanBP1 and RanGAP1. Interacts with CFTR.

It is found in the cytoplasm. It localises to the nucleus. Its function is as follows. Export receptor for importin-alpha. Mediates importin-alpha re-export from the nucleus to the cytoplasm after import substrates (cargos) have been released into the nucleoplasm. In the nucleus binds cooperatively to importin-alpha and to the GTPase Ran in its active GTP-bound form. Docking of this trimeric complex to the nuclear pore complex (NPC) is mediated through binding to nucleoporins. Upon transit of a nuclear export complex into the cytoplasm, disassembling of the complex and hydrolysis of Ran-GTP to Ran-GDP (induced by RANBP1 and RANGAP1, respectively) cause release of the importin-alpha from the export receptor. CSE1L/XPO2 then return to the nuclear compartment and mediate another round of transport. The directionality of nuclear export is thought to be conferred by an asymmetric distribution of the GTP- and GDP-bound forms of Ran between the cytoplasm and nucleus. The polypeptide is Exportin-2 (CSE1L) (Bos taurus (Bovine)).